The primary structure comprises 154 residues: Fimbrial protein (154 aa).

The propeptide at 1 to 6 (MNAQKG) is leader sequence. N-methylphenylalanine is present on F7. Residues 7–29 (FTLIELMIVIAIIGILAAIALPA) form a helical membrane-spanning segment.

It belongs to the N-Me-Phe pilin family. As to quaternary structure, the pili are polar flexible filaments of about 5.4 nanometers diameter and 2.5 micrometers average length; they consist of only a single polypeptide chain arranged in a helical configuration of five subunits per turn in the assembled pilus.

It localises to the fimbrium. It is found in the membrane. The protein is Fimbrial protein (tfpA) of Moraxella nonliquefaciens.